A 147-amino-acid polypeptide reads, in one-letter code: Transcriptional repressor NrdR (147 aa).

A zinc finger lies at 3–34 (CPYCGNVETTVVETRESDEGDAVRRRRRCSAC). Residues 49–139 (PAVVKKNGDR…VYREFEDIDA (91 aa)) enclose the ATP-cone domain.

It belongs to the NrdR family. It depends on Zn(2+) as a cofactor.

Its function is as follows. Negatively regulates transcription of bacterial ribonucleotide reductase nrd genes and operons by binding to NrdR-boxes. The chain is Transcriptional repressor NrdR from Leptothrix cholodnii (strain ATCC 51168 / LMG 8142 / SP-6) (Leptothrix discophora (strain SP-6)).